Reading from the N-terminus, the 518-residue chain is Zinc finger protein 776 (518 aa).

In terms of domain architecture, KRAB spans 14-89 (VTFEDVAVNF…HWTGVCTKKV (76 aa)). Glycyl lysine isopeptide (Lys-Gly) (interchain with G-Cter in SUMO2) cross-links involve residues K171, K196, K220, and K247. A C2H2-type 1; degenerate zinc finger spans residues 208–230 (YICGESTIPFSNKHSLVLHQRLL). A C2H2-type 2; degenerate zinc finger spans residues 236–258 (YVCSDSGKFTSKSNSFNNHQGVR). 7 C2H2-type zinc fingers span residues 264 to 286 (YQCG…QRVH), 292 to 314 (YECG…QRVH), 320 to 342 (YECD…QRVH), 348 to 370 (YQCG…QRVH), 376 to 398 (FECT…QRVH), 404 to 426 (YECK…QRVH), and 432 to 454 (YECR…QQIH). The C2H2-type 10; degenerate zinc-finger motif lies at 460–482 (HECGECGKCFHQKGSLIRHQQIH). The segment at 488 to 510 (HECGECGKCFRQKGNLIKHQRVH) adopts a C2H2-type 11 zinc-finger fold.

The protein belongs to the krueppel C2H2-type zinc-finger protein family.

It localises to the nucleus. In terms of biological role, may be involved in transcriptional regulation. The sequence is that of Zinc finger protein 776 (ZNF776) from Homo sapiens (Human).